A 466-amino-acid polypeptide reads, in one-letter code: Bifunctional protein GlmU (466 aa).

Residues 1–233 (MLHKSVLGLV…ADEAMGANDR (233 aa)) form a pyrophosphorylase region. Residues 11–14 (LAAG), Lys25, Gln79, and 84–85 (GT) each bind UDP-N-acetyl-alpha-D-glucosamine. Asp108 provides a ligand contact to Mg(2+). 4 residues coordinate UDP-N-acetyl-alpha-D-glucosamine: Gly143, Glu158, Asn173, and Asn231. Asn231 contacts Mg(2+). A linker region spans residues 234-254 (AQLAALEAVYRQRKVQELFAQ). Residues 255-466 (GVTLIDPNRI…QKKKEHKNDA (212 aa)) form an N-acetyltransferase region. Residues Arg337 and Lys355 each contribute to the UDP-N-acetyl-alpha-D-glucosamine site. His367 functions as the Proton acceptor in the catalytic mechanism. Tyr370 and Asn381 together coordinate UDP-N-acetyl-alpha-D-glucosamine. Residues Ala384, 390-391 (NY), Ser409, Ala427, and Arg444 each bind acetyl-CoA.

It in the N-terminal section; belongs to the N-acetylglucosamine-1-phosphate uridyltransferase family. In the C-terminal section; belongs to the transferase hexapeptide repeat family. Homotrimer. The cofactor is Mg(2+).

It localises to the cytoplasm. It carries out the reaction alpha-D-glucosamine 1-phosphate + acetyl-CoA = N-acetyl-alpha-D-glucosamine 1-phosphate + CoA + H(+). It catalyses the reaction N-acetyl-alpha-D-glucosamine 1-phosphate + UTP + H(+) = UDP-N-acetyl-alpha-D-glucosamine + diphosphate. The protein operates within nucleotide-sugar biosynthesis; UDP-N-acetyl-alpha-D-glucosamine biosynthesis; N-acetyl-alpha-D-glucosamine 1-phosphate from alpha-D-glucosamine 6-phosphate (route II): step 2/2. It functions in the pathway nucleotide-sugar biosynthesis; UDP-N-acetyl-alpha-D-glucosamine biosynthesis; UDP-N-acetyl-alpha-D-glucosamine from N-acetyl-alpha-D-glucosamine 1-phosphate: step 1/1. Its pathway is bacterial outer membrane biogenesis; LPS lipid A biosynthesis. Its function is as follows. Catalyzes the last two sequential reactions in the de novo biosynthetic pathway for UDP-N-acetylglucosamine (UDP-GlcNAc). The C-terminal domain catalyzes the transfer of acetyl group from acetyl coenzyme A to glucosamine-1-phosphate (GlcN-1-P) to produce N-acetylglucosamine-1-phosphate (GlcNAc-1-P), which is converted into UDP-GlcNAc by the transfer of uridine 5-monophosphate (from uridine 5-triphosphate), a reaction catalyzed by the N-terminal domain. This is Bifunctional protein GlmU from Dichelobacter nodosus (strain VCS1703A).